The sequence spans 366 residues: Chorismate synthase (366 aa).

Positions 48 and 54 each coordinate NADP(+). FMN contacts are provided by residues 132–134 (RSS), 244–245 (NA), Gly289, 304–308 (KPTSS), and Arg330.

This sequence belongs to the chorismate synthase family. As to quaternary structure, homotetramer. FMNH2 serves as cofactor.

The catalysed reaction is 5-O-(1-carboxyvinyl)-3-phosphoshikimate = chorismate + phosphate. Its pathway is metabolic intermediate biosynthesis; chorismate biosynthesis; chorismate from D-erythrose 4-phosphate and phosphoenolpyruvate: step 7/7. Its function is as follows. Catalyzes the anti-1,4-elimination of the C-3 phosphate and the C-6 proR hydrogen from 5-enolpyruvylshikimate-3-phosphate (EPSP) to yield chorismate, which is the branch point compound that serves as the starting substrate for the three terminal pathways of aromatic amino acid biosynthesis. This reaction introduces a second double bond into the aromatic ring system. The polypeptide is Chorismate synthase (Methylorubrum populi (strain ATCC BAA-705 / NCIMB 13946 / BJ001) (Methylobacterium populi)).